A 288-amino-acid chain; its full sequence is MALFRKKDKYIRITPNNSLKGSVSHNVPEVPDELFAKCPACKHMIYKKDLGLAKICPTCSYNFRISAQERLTLTVDEGSFQELFISIETKDPLRFPGYQEKLQKAKETTGLHEAVLTGKAMVKGQQIALAIMDSHFIMASMGTVVGEKITRLFELAIEENLPVVIFTASGGARMQEGIMSLMQMAKVSAAVKRHSNAGLFYLTILTDPTTGGVTASFAMEGDIILAEPQSLVGFAGRRVIETTVRENLPDDFQKAEFLQDHGFVDAIVKRTELRDKIAHLVAFHGGGQ.

Residues 34–288 form the CoA carboxyltransferase N-terminal domain; that stretch reads LFAKCPACKH…HLVAFHGGGQ (255 aa). Residues cysteine 38, cysteine 41, cysteine 56, and cysteine 59 each contribute to the Zn(2+) site. The C4-type zinc finger occupies 38 to 59; sequence CPACKHMIYKKDLGLAKICPTC.

This sequence belongs to the AccD/PCCB family. As to quaternary structure, acetyl-CoA carboxylase is a heterohexamer composed of biotin carboxyl carrier protein (AccB), biotin carboxylase (AccC) and two subunits each of ACCase subunit alpha (AccA) and ACCase subunit beta (AccD). The cofactor is Zn(2+).

It is found in the cytoplasm. The catalysed reaction is N(6)-carboxybiotinyl-L-lysyl-[protein] + acetyl-CoA = N(6)-biotinyl-L-lysyl-[protein] + malonyl-CoA. It participates in lipid metabolism; malonyl-CoA biosynthesis; malonyl-CoA from acetyl-CoA: step 1/1. Functionally, component of the acetyl coenzyme A carboxylase (ACC) complex. Biotin carboxylase (BC) catalyzes the carboxylation of biotin on its carrier protein (BCCP) and then the CO(2) group is transferred by the transcarboxylase to acetyl-CoA to form malonyl-CoA. This chain is Acetyl-coenzyme A carboxylase carboxyl transferase subunit beta, found in Streptococcus pyogenes serotype M3 (strain ATCC BAA-595 / MGAS315).